The chain runs to 590 residues: Multidrug resistance ABC transporter ATP-binding and permease protein (590 aa).

The next 6 membrane-spanning stretches (helical) occupy residues 35–55, 79–99, 150–170, 176–196, 261–281, and 292–312; these read YLFFVIGIVAGIIGTLIQLQV, IALYIGSAAVSAIAAIVLGIF, IPQAFTSILLLVGSIIFMLQM, LAMIIAVPIVMLIMFPIMTFG, VMMLSMMLMIFGLLAYGIYLI, and LGMMMYLMNLIGVVPTVATFF. The ABC transmembrane type-1 domain maps to 38–317; the sequence is FVIGIVAGII…VATFFTELAK (280 aa). Residues 349–584 enclose the ABC transporter domain; it reads LSAHHVDFAY…HPLYAKYVSE (236 aa). 382 to 389 is an ATP binding site; sequence GPSGGGKS.

The protein belongs to the ABC transporter superfamily. Multidrug exporter LmrA (TC 3.A.1.117.1) family. As to quaternary structure, homodimer.

The protein localises to the cell membrane. It carries out the reaction ATP + H2O + xenobioticSide 1 = ADP + phosphate + xenobioticSide 2.. Efflux transporter for a variety of amphiphilic cationic compounds, including antibiotics. This Lactococcus lactis subsp. cremoris (strain MG1363) protein is Multidrug resistance ABC transporter ATP-binding and permease protein (lmrA).